A 425-amino-acid chain; its full sequence is Histidine--tRNA ligase (425 aa).

The protein belongs to the class-II aminoacyl-tRNA synthetase family. In terms of assembly, homodimer.

The protein resides in the cytoplasm. It catalyses the reaction tRNA(His) + L-histidine + ATP = L-histidyl-tRNA(His) + AMP + diphosphate + H(+). The protein is Histidine--tRNA ligase of Streptomyces coelicolor (strain ATCC BAA-471 / A3(2) / M145).